Here is a 345-residue protein sequence, read N- to C-terminus: Eukaryotic translation initiation factor 3 subunit F (345 aa).

The 137-residue stretch at 30 to 166 (VVIQPQAIFS…TRAYISAPVG (137 aa)) folds into the MPN domain. A disordered region spans residues 308–345 (GGESGGAESGAQRGQRGGKGGRGGQQRNQERGAEEARA). Over residues 322 to 331 (QRGGKGGRGG) the composition is skewed to gly residues. The segment covering 335-345 (NQERGAEEARA) has biased composition (basic and acidic residues).

It belongs to the eIF-3 subunit F family. In terms of assembly, component of the eukaryotic translation initiation factor 3 (eIF-3) complex.

It is found in the cytoplasm. Component of the eukaryotic translation initiation factor 3 (eIF-3) complex, which is involved in protein synthesis of a specialized repertoire of mRNAs and, together with other initiation factors, stimulates binding of mRNA and methionyl-tRNAi to the 40S ribosome. The eIF-3 complex specifically targets and initiates translation of a subset of mRNAs involved in cell proliferation. The protein is Eukaryotic translation initiation factor 3 subunit F of Aspergillus clavatus (strain ATCC 1007 / CBS 513.65 / DSM 816 / NCTC 3887 / NRRL 1 / QM 1276 / 107).